A 405-amino-acid chain; its full sequence is Type III polyketide synthase 10 (405 aa).

A compositionally biased stretch (polar residues) spans 1–18 (MVSTNAGGIASKQASSMA). The disordered stretch occupies residues 1 to 20 (MVSTNAGGIASKQASSMAPN). The active-site Nucleophile is cysteine 170.

The protein belongs to the thiolase-like superfamily. Chalcone/stilbene synthases family. As to quaternary structure, interacts with STS1. As to expression, expressed in adult flowers.

Its subcellular location is the endoplasmic reticulum. Its function is as follows. Plant type III polyketide synthases (PKSs) that catalyzes the condensation of fatty acyl-CoA with malonyl-CoA to generate triketide and tetraketide alpha-pyrones, the main components of pollen exine and potential sporopollenin precursors. May be involved in the synthesis of sporopollenin precursors in tapetal cells to regulate pollen wall formation. Required for exine and Ubisch body formation in anthers. Does not possess chalcone synthase (CHS) activity in vitro with the substrates 4-coumaroyl-CoA and malonyl-CoA. This is Type III polyketide synthase 10 from Oryza sativa subsp. japonica (Rice).